Consider the following 333-residue polypeptide: MQHNQLLEQLYSGHSLSTSESTALFNAVIQGELSNEQIAAMLIALKVREANTEEIAGAVAASLQNAKVFPRPDYPFADIVGTGGDGQNTINISTASAIVAASMGAKVAKHGNRSVSSKSGASDVLTALGVNVNVTPEQARQALDEIGVCFLFAQQYHSGFRHVAPVRAALKTHTIFNILGPLINPARPTYHLLGVYAPELVKTYAETAVALEHQHSFVVHGSGLDEVALHGETQVAEIKNGKIEYFTLTPEDFGLKTQSLESLRGGEPQKNAQYLTALLQGKGKAEHANTVAANTALLLKLFGYDDLKQNVQNVLAHLLSGKAFETLQKLTTY.

5-phospho-alpha-D-ribose 1-diphosphate-binding positions include Gly-81, 84–85 (GD), Thr-89, 91–94 (NIST), 109–117 (KHGNRSVSS), and Ala-121. Gly-81 contributes to the anthranilate binding site. Ser-93 is a binding site for Mg(2+). Anthranilate is bound at residue Asn-112. Arg-167 is a binding site for anthranilate. The Mg(2+) site is built by Asp-225 and Glu-226.

Belongs to the anthranilate phosphoribosyltransferase family. As to quaternary structure, homodimer. Mg(2+) serves as cofactor.

The enzyme catalyses N-(5-phospho-beta-D-ribosyl)anthranilate + diphosphate = 5-phospho-alpha-D-ribose 1-diphosphate + anthranilate. Its pathway is amino-acid biosynthesis; L-tryptophan biosynthesis; L-tryptophan from chorismate: step 2/5. Catalyzes the transfer of the phosphoribosyl group of 5-phosphorylribose-1-pyrophosphate (PRPP) to anthranilate to yield N-(5'-phosphoribosyl)-anthranilate (PRA). The chain is Anthranilate phosphoribosyltransferase from Haemophilus influenzae (strain PittGG).